The chain runs to 85 residues: UPF0512 protein R (85 aa).

Belongs to the UPF0512 family.

In Dictyostelium discoideum (Social amoeba), this protein is UPF0512 protein R.